Reading from the N-terminus, the 230-residue chain is Response regulator MprA (230 aa).

One can recognise a Response regulatory domain in the interval 4-118 (RILVVDDDRA…ELLARMRALL (115 aa)). At Asp-48 the chain carries 4-aspartylphosphate. Positions 129–227 (SMAMRFSDLT…VRGVGYVLRE (99 aa)) form a DNA-binding region, ompR/PhoB-type.

Phosphorylated and dephosphorylated by MprB.

The protein resides in the cytoplasm. Member of the two-component regulatory system MprB/MprA which contributes to maintaining a balance among several systems involved in stress resistance and is required for establishment and maintenance of persistent infection in the host. Functions as a transcriptional regulator that recognizes a 19-bp nucleotide motif comprizing two loosely conserved 8-bp direct DNA-binding motif repeats separated by a 3-bp spacer region. The protein is Response regulator MprA (mprA) of Mycobacterium tuberculosis (strain ATCC 25177 / H37Ra).